Here is a 245-residue protein sequence, read N- to C-terminus: NAD(P)H-hydrate epimerase (245 aa).

Residues 16–224 form the YjeF N-terminal domain; the sequence is AAALDAELMA…HIADKYDLEV (209 aa). 68-72 is a binding site for (6S)-NADPHX; it reads NNGGD. Residues asparagine 69 and aspartate 131 each coordinate K(+). Residues 135 to 141 and aspartate 164 contribute to the (6S)-NADPHX site; that span reads GFSFKPP. Serine 167 is a binding site for K(+).

This sequence belongs to the NnrE/AIBP family. K(+) is required as a cofactor.

It is found in the cytoplasm. The protein localises to the mitochondrion. It carries out the reaction (6R)-NADHX = (6S)-NADHX. It catalyses the reaction (6R)-NADPHX = (6S)-NADPHX. Catalyzes the epimerization of the S- and R-forms of NAD(P)HX, a damaged form of NAD(P)H that is a result of enzymatic or heat-dependent hydration. This is a prerequisite for the S-specific NAD(P)H-hydrate dehydratase to allow the repair of both epimers of NAD(P)HX. This chain is NAD(P)H-hydrate epimerase, found in Yarrowia lipolytica (strain CLIB 122 / E 150) (Yeast).